We begin with the raw amino-acid sequence, 85 residues long: Small ribosomal subunit protein bS16 (85 aa).

This sequence belongs to the bacterial ribosomal protein bS16 family.

The sequence is that of Small ribosomal subunit protein bS16 from Acinetobacter baylyi (strain ATCC 33305 / BD413 / ADP1).